The following is a 201-amino-acid chain: Urease accessory protein UreG (201 aa).

12–19 (GPVGSGKT) is a binding site for GTP.

It belongs to the SIMIBI class G3E GTPase family. UreG subfamily. Homodimer. UreD, UreF and UreG form a complex that acts as a GTP-hydrolysis-dependent molecular chaperone, activating the urease apoprotein by helping to assemble the nickel containing metallocenter of UreC. The UreE protein probably delivers the nickel.

The protein localises to the cytoplasm. Facilitates the functional incorporation of the urease nickel metallocenter. This process requires GTP hydrolysis, probably effectuated by UreG. The polypeptide is Urease accessory protein UreG (Dechloromonas aromatica (strain RCB)).